The sequence spans 45 residues: Keratin-associated protein 22-2 (45 aa).

Belongs to the KRTAP type 20 family. Interacts with hair keratins.

In terms of biological role, in the hair cortex, hair keratin intermediate filaments are embedded in an interfilamentous matrix, consisting of hair keratin-associated proteins (KRTAP), which are essential for the formation of a rigid and resistant hair shaft through their extensive disulfide bond cross-linking with abundant cysteine residues of hair keratins. The matrix proteins include the high-sulfur and high-glycine-tyrosine keratins. The chain is Keratin-associated protein 22-2 (KRTAP22-2) from Homo sapiens (Human).